We begin with the raw amino-acid sequence, 208 residues long: Recombination protein RecR (208 aa).

A C4-type zinc finger spans residues 57-72 (CALCNTLTEQEVCVTC). The region spanning 80 to 187 (SKLCVVETPA…QVTRLARGVP (108 aa)) is the Toprim domain.

This sequence belongs to the RecR family.

Its function is as follows. May play a role in DNA repair. It seems to be involved in an RecBC-independent recombinational process of DNA repair. It may act with RecF and RecO. The protein is Recombination protein RecR of Polaromonas naphthalenivorans (strain CJ2).